Consider the following 607-residue polypeptide: UvrABC system protein C (607 aa).

One can recognise a GIY-YIG domain in the interval 11–89; the sequence is CKPGVYRFED…IKEFAPPCNV (79 aa). A UVR domain is found at 201–236; it reads SSLLESLKKKMLKASKNKEYEEAAILRDKIQAAQTV.

Belongs to the UvrC family. In terms of assembly, interacts with UvrB in an incision complex.

The protein localises to the cytoplasm. Its function is as follows. The UvrABC repair system catalyzes the recognition and processing of DNA lesions. UvrC both incises the 5' and 3' sides of the lesion. The N-terminal half is responsible for the 3' incision and the C-terminal half is responsible for the 5' incision. In Tropheryma whipplei (strain TW08/27) (Whipple's bacillus), this protein is UvrABC system protein C.